Consider the following 446-residue polypeptide: Exodeoxyribonuclease 7 large subunit (446 aa).

It belongs to the XseA family. In terms of assembly, heterooligomer composed of large and small subunits.

The protein localises to the cytoplasm. The enzyme catalyses Exonucleolytic cleavage in either 5'- to 3'- or 3'- to 5'-direction to yield nucleoside 5'-phosphates.. Bidirectionally degrades single-stranded DNA into large acid-insoluble oligonucleotides, which are then degraded further into small acid-soluble oligonucleotides. This is Exodeoxyribonuclease 7 large subunit from Streptococcus pyogenes serotype M3 (strain ATCC BAA-595 / MGAS315).